The primary structure comprises 339 residues: Cyclin-D1-1 (339 aa).

The protein belongs to the cyclin family. Cyclin D subfamily. As to quaternary structure, interacts with CDKA-1 and KRP6/ICK4. Expressed in roots, leaves and flowers.

May activate cell cycle in the root apical meristem (RAM) and promote embryonic root (radicle) protrusion. The chain is Cyclin-D1-1 (CYCD1-1) from Arabidopsis thaliana (Mouse-ear cress).